The following is a 254-amino-acid chain: MNFNVIIPARYASTRFPGKPLVEINGKPMVQHVYDRAIESGASNVIVATDDARIAKAVSDFGGKYCMTGAHHESGTERLAEVVEMQDMLSQEIVVNVQGDEPFIPAENIQQVAENLHHHQQAEMATLAVKIVDVEEAFNPNAVKVVLDKQGYAMYFTRATIPYDRARFLDEDIIDEIGDYYLRHVGIYAYRAGFIKQYVNMSPSGLEQIESLEQLRVLWHGEKIHVDIARKTPPAGIDTPEDLKRILADPSLKF.

The protein belongs to the KdsB family.

The protein resides in the cytoplasm. It catalyses the reaction 3-deoxy-alpha-D-manno-oct-2-ulosonate + CTP = CMP-3-deoxy-beta-D-manno-octulosonate + diphosphate. The protein operates within nucleotide-sugar biosynthesis; CMP-3-deoxy-D-manno-octulosonate biosynthesis; CMP-3-deoxy-D-manno-octulosonate from 3-deoxy-D-manno-octulosonate and CTP: step 1/1. Its pathway is bacterial outer membrane biogenesis; lipopolysaccharide biosynthesis. Functionally, activates KDO (a required 8-carbon sugar) for incorporation into bacterial lipopolysaccharide in Gram-negative bacteria. The protein is 3-deoxy-manno-octulosonate cytidylyltransferase of Pseudoalteromonas atlantica (strain T6c / ATCC BAA-1087).